The chain runs to 128 residues: Large ribosomal subunit protein uL22 (128 aa).

Belongs to the universal ribosomal protein uL22 family. As to quaternary structure, part of the 50S ribosomal subunit.

This protein binds specifically to 23S rRNA; its binding is stimulated by other ribosomal proteins, e.g. L4, L17, and L20. It is important during the early stages of 50S assembly. It makes multiple contacts with different domains of the 23S rRNA in the assembled 50S subunit and ribosome. In terms of biological role, the globular domain of the protein is located near the polypeptide exit tunnel on the outside of the subunit, while an extended beta-hairpin is found that lines the wall of the exit tunnel in the center of the 70S ribosome. This is Large ribosomal subunit protein uL22 from Methylocella silvestris (strain DSM 15510 / CIP 108128 / LMG 27833 / NCIMB 13906 / BL2).